The following is a 247-amino-acid chain: MSPNLTSSSDLFTQEQKEKLLNPINHSQVTQDLSENVILTTVDDLYNWARLSSLWPLLYGTACCFIEFAALIGSRFDFDRFGLVPRSSPRQADLIITAGTITMKMAPALVRLYEQMPDPKYVIAMGACTITGGMFSSDSTTAVRGVDKLIPVDVYIPGCPPRPEAIFDAIVKLRKKVANDSIQVRPEQNHRYYSTTHTMKATSPILTGQYLRAQTRQAPPLELSEAMGMPIPPALMTTEQKEEVDRG.

[4Fe-4S] cluster-binding residues include C63, C64, C128, and C159.

This sequence belongs to the complex I 20 kDa subunit family. As to quaternary structure, NDH-1 can be composed of about 15 different subunits; different subcomplexes with different compositions have been identified which probably have different functions. [4Fe-4S] cluster is required as a cofactor.

It localises to the cellular thylakoid membrane. It carries out the reaction a plastoquinone + NADH + (n+1) H(+)(in) = a plastoquinol + NAD(+) + n H(+)(out). It catalyses the reaction a plastoquinone + NADPH + (n+1) H(+)(in) = a plastoquinol + NADP(+) + n H(+)(out). Functionally, NDH-1 shuttles electrons from an unknown electron donor, via FMN and iron-sulfur (Fe-S) centers, to quinones in the respiratory and/or the photosynthetic chain. The immediate electron acceptor for the enzyme in this species is believed to be plastoquinone. Couples the redox reaction to proton translocation, and thus conserves the redox energy in a proton gradient. Cyanobacterial NDH-1 also plays a role in inorganic carbon-concentration. In Gloeothece citriformis (strain PCC 7424) (Cyanothece sp. (strain PCC 7424)), this protein is NAD(P)H-quinone oxidoreductase subunit K.